Reading from the N-terminus, the 415-residue chain is Diaminopimelate decarboxylase (415 aa).

Lys-54 carries the post-translational modification N6-(pyridoxal phosphate)lysine. Pyridoxal 5'-phosphate contacts are provided by residues Gly-223 and 264 to 267; that span reads EPGR. 3 residues coordinate substrate: Arg-267, Arg-303, and Tyr-307. The active-site Proton donor is the Cys-338. Residues Glu-339 and Tyr-374 each coordinate substrate. Tyr-374 contributes to the pyridoxal 5'-phosphate binding site.

It belongs to the Orn/Lys/Arg decarboxylase class-II family. LysA subfamily. In terms of assembly, homodimer. The cofactor is pyridoxal 5'-phosphate.

It catalyses the reaction meso-2,6-diaminopimelate + H(+) = L-lysine + CO2. The protein operates within amino-acid biosynthesis; L-lysine biosynthesis via DAP pathway; L-lysine from DL-2,6-diaminopimelate: step 1/1. Specifically catalyzes the decarboxylation of meso-diaminopimelate (meso-DAP) to L-lysine. The protein is Diaminopimelate decarboxylase of Buchnera aphidicola subsp. Acyrthosiphon pisum (strain APS) (Acyrthosiphon pisum symbiotic bacterium).